A 273-amino-acid chain; its full sequence is Rhamnulose-1-phosphate aldolase (273 aa).

The active site involves E117. Residues H140, H142, and H211 each coordinate Zn(2+).

It belongs to the aldolase class II family. RhaD subfamily. Requires Zn(2+) as cofactor.

The protein localises to the cytoplasm. The catalysed reaction is L-rhamnulose 1-phosphate = (S)-lactaldehyde + dihydroxyacetone phosphate. The protein operates within carbohydrate degradation; L-rhamnose degradation; glycerone phosphate from L-rhamnose: step 3/3. Catalyzes the reversible cleavage of L-rhamnulose-1-phosphate to dihydroxyacetone phosphate (DHAP) and L-lactaldehyde. This Listeria monocytogenes serotype 4b (strain F2365) protein is Rhamnulose-1-phosphate aldolase.